An 87-amino-acid polypeptide reads, in one-letter code: UPF0250 protein ETA_23570 (87 aa).

It belongs to the UPF0250 family.

This Erwinia tasmaniensis (strain DSM 17950 / CFBP 7177 / CIP 109463 / NCPPB 4357 / Et1/99) protein is UPF0250 protein ETA_23570.